The primary structure comprises 377 residues: Floricaula/leafy homolog (377 aa).

A compositionally biased stretch (basic and acidic residues) spans 116 to 126; that stretch reads RRRLDEEDPRR. The tract at residues 116-190 is disordered; the sequence is RRRLDEEDPR…RKKGQRKVVD (75 aa). Residues 131 to 141 are compositionally biased toward polar residues; sequence SGDNNTNTLDA. 3 DNA-binding regions span residues 206–210, 275–282, and 346–349; these read REHPF, NKPKMRHY, and YVPT.

It belongs to the FLO/LFY family. In developing inflorescences, leaf primordia and very young leaves.

It localises to the nucleus. Probable transcription factor. This is Floricaula/leafy homolog (FL) from Populus trichocarpa (Western balsam poplar).